The chain runs to 178 residues: Zinc finger protein ZAT11 (178 aa).

C2H2-type zinc fingers lie at residues 47–69 (FECK…RASH) and 94–116 (HKCS…MRRH).

Expressed in leaves.

Its subcellular location is the nucleus. Its function is as follows. Probable transcription factor that may be involved in stress responses. This chain is Zinc finger protein ZAT11 (ZAT11), found in Arabidopsis thaliana (Mouse-ear cress).